A 340-amino-acid chain; its full sequence is Glyceraldehyde-3-phosphate dehydrogenase (340 aa).

Residues T11–I12 and G109 contribute to the NAD(+) site. S138–N140 serves as a coordination point for D-glyceraldehyde 3-phosphate. C139 serves as the catalytic Nucleophile. Residue R167 coordinates NAD(+). H193 to A194 contacts D-glyceraldehyde 3-phosphate. Q300 contacts NAD(+).

It belongs to the glyceraldehyde-3-phosphate dehydrogenase family. In terms of assembly, homotetramer.

It localises to the cytoplasm. It catalyses the reaction D-glyceraldehyde 3-phosphate + phosphate + NADP(+) = (2R)-3-phospho-glyceroyl phosphate + NADPH + H(+). The enzyme catalyses D-glyceraldehyde 3-phosphate + phosphate + NAD(+) = (2R)-3-phospho-glyceroyl phosphate + NADH + H(+). The protein operates within carbohydrate degradation; glycolysis; pyruvate from D-glyceraldehyde 3-phosphate: step 1/5. The polypeptide is Glyceraldehyde-3-phosphate dehydrogenase (Saccharolobus islandicus (strain L.S.2.15 / Lassen #1) (Sulfolobus islandicus)).